The following is a 342-amino-acid chain: MATH domain and coiled-coil domain-containing protein At3g44800 (342 aa).

The MATH domain occupies 3 to 129; it reads YEKFTWVIKN…NNEVKIVAEV (127 aa). A coiled-coil region spans residues 253 to 327; it reads KVDWLERKLE…ALLEKEKGKV (75 aa).

In Arabidopsis thaliana (Mouse-ear cress), this protein is MATH domain and coiled-coil domain-containing protein At3g44800.